The sequence spans 185 residues: Ribosome-recycling factor (185 aa).

Belongs to the RRF family.

The protein resides in the cytoplasm. Functionally, responsible for the release of ribosomes from messenger RNA at the termination of protein biosynthesis. May increase the efficiency of translation by recycling ribosomes from one round of translation to another. The polypeptide is Ribosome-recycling factor (Coxiella burnetii (strain CbuK_Q154) (Coxiella burnetii (strain Q154))).